Consider the following 394-residue polypeptide: RNA binding protein fox-1 homolog 2 (394 aa).

Disordered regions lie at residues 1-70 (MGRL…DYAG) and 83-135 (TQAH…HVSN). Polar residues-rich tracts occupy residues 24–36 (RDSQ…TTTP) and 83–103 (TQAH…SLTT). Low complexity predominate over residues 105–125 (GGAQTDGQQSQTQSSENSESK). One can recognise an RRM domain in the interval 129–205 (KRLHVSNIPF…RKIEVNNATA (77 aa)). An Omega-N-methylarginine modification is found at R285. Asymmetric dimethylarginine occurs at positions 301 and 333. R385 and R390 each carry asymmetric dimethylarginine; alternate. Omega-N-methylarginine; alternate is present on residues R385 and R390.

As to quaternary structure, interacts with ER-alpha N-terminal activation domain. Interacts with RBPMS; the interaction allows cooperative assembly of stable cell-specific alternative splicing regulatory complexes.

Its subcellular location is the nucleus. The protein localises to the cytoplasm. Functionally, RNA-binding protein that regulates alternative splicing events by binding to 5'-UGCAUGU-3' elements. Prevents binding of U2AF2 to the 3'-splice site. Regulates alternative splicing of tissue-specific exons and of differentially spliced exons during erythropoiesis. Seems to act as a coregulatory factor of ER-alpha. Together with RNA binding proteins RBPMS and MBNL1/2, activates vascular smooth muscle cells alternative splicing events. This chain is RNA binding protein fox-1 homolog 2 (RBFOX2), found in Bos taurus (Bovine).